A 548-amino-acid chain; its full sequence is Chaperonin GroEL (548 aa).

ATP contacts are provided by residues 29–32, K50, 86–90, G414, 478–480, and D494; these read TMGP, DGTTT, and NAA.

It belongs to the chaperonin (HSP60) family. In terms of assembly, forms a cylinder of 14 subunits composed of two heptameric rings stacked back-to-back. Interacts with the co-chaperonin GroES.

The protein resides in the cytoplasm. The catalysed reaction is ATP + H2O + a folded polypeptide = ADP + phosphate + an unfolded polypeptide.. Together with its co-chaperonin GroES, plays an essential role in assisting protein folding. The GroEL-GroES system forms a nano-cage that allows encapsulation of the non-native substrate proteins and provides a physical environment optimized to promote and accelerate protein folding. This chain is Chaperonin GroEL, found in Legionella pneumophila (strain Paris).